Consider the following 177-residue polypeptide: ADP-ribosylation factor-like protein 17 (177 aa).

G2 carries N-myristoyl glycine lipidation. GTP-binding positions include 24 to 31 (SLDTAGKT), 67 to 71 (DVGSH), and 125 to 128 (LPHS).

It belongs to the small GTPase superfamily. Arf family.

It is found in the golgi apparatus. GTP-binding protein that functions as an allosteric activator of the cholera toxin catalytic subunit, an ADP-ribosyltransferase. Involved in protein trafficking; may modulate vesicle budding and uncoating within the Golgi apparatus. The polypeptide is ADP-ribosylation factor-like protein 17 (ARL17A) (Homo sapiens (Human)).